The sequence spans 127 residues: MPKTFHRTDRVSAQLRRELGTLVHNAVREHGLPSVSVSDVEITRDMAHAKVFVTALMPERSAEAVAGLKELGYRLRMDLARAMKLRHVPELHFHYDDSVDRGEHIDNILRDLPDTLAAEKRRESDEE.

This sequence belongs to the RbfA family. As to quaternary structure, monomer. Binds 30S ribosomal subunits, but not 50S ribosomal subunits or 70S ribosomes.

The protein resides in the cytoplasm. Its function is as follows. One of several proteins that assist in the late maturation steps of the functional core of the 30S ribosomal subunit. Associates with free 30S ribosomal subunits (but not with 30S subunits that are part of 70S ribosomes or polysomes). Required for efficient processing of 16S rRNA. May interact with the 5'-terminal helix region of 16S rRNA. This Stenotrophomonas maltophilia (strain K279a) protein is Ribosome-binding factor A.